Here is an 890-residue protein sequence, read N- to C-terminus: Alanine--tRNA ligase (890 aa).

His578, His582, Cys689, and His693 together coordinate Zn(2+).

The protein belongs to the class-II aminoacyl-tRNA synthetase family. Zn(2+) is required as a cofactor.

The protein resides in the cytoplasm. It catalyses the reaction tRNA(Ala) + L-alanine + ATP = L-alanyl-tRNA(Ala) + AMP + diphosphate. Its function is as follows. Catalyzes the attachment of alanine to tRNA(Ala) in a two-step reaction: alanine is first activated by ATP to form Ala-AMP and then transferred to the acceptor end of tRNA(Ala). Also edits incorrectly charged Ser-tRNA(Ala) and Gly-tRNA(Ala) via its editing domain. The sequence is that of Alanine--tRNA ligase from Deinococcus radiodurans (strain ATCC 13939 / DSM 20539 / JCM 16871 / CCUG 27074 / LMG 4051 / NBRC 15346 / NCIMB 9279 / VKM B-1422 / R1).